Reading from the N-terminus, the 442-residue chain is tRNA-2-methylthio-N(6)-dimethylallyladenosine synthase (442 aa).

Positions 3 to 120 (KKLYIETHGC…LPEMIDAARI (118 aa)) constitute an MTTase N-terminal domain. Positions 12, 49, 83, 157, 161, and 164 each coordinate [4Fe-4S] cluster. The Radical SAM core domain occupies 143-375 (RVDGPSAYVS…QHRLNQQGFE (233 aa)). The region spanning 378-442 (RQMVGSIQRI…PHSLRGSLLQ (65 aa)) is the TRAM domain.

It belongs to the methylthiotransferase family. MiaB subfamily. Monomer. The cofactor is [4Fe-4S] cluster.

It is found in the cytoplasm. The enzyme catalyses N(6)-dimethylallyladenosine(37) in tRNA + (sulfur carrier)-SH + AH2 + 2 S-adenosyl-L-methionine = 2-methylsulfanyl-N(6)-dimethylallyladenosine(37) in tRNA + (sulfur carrier)-H + 5'-deoxyadenosine + L-methionine + A + S-adenosyl-L-homocysteine + 2 H(+). Its function is as follows. Catalyzes the methylthiolation of N6-(dimethylallyl)adenosine (i(6)A), leading to the formation of 2-methylthio-N6-(dimethylallyl)adenosine (ms(2)i(6)A) at position 37 in tRNAs that read codons beginning with uridine. The sequence is that of tRNA-2-methylthio-N(6)-dimethylallyladenosine synthase from Pseudomonas savastanoi pv. phaseolicola (strain 1448A / Race 6) (Pseudomonas syringae pv. phaseolicola (strain 1448A / Race 6)).